A 715-amino-acid chain; its full sequence is ATP-binding cassette sub-family B member 10, mitochondrial (715 aa).

A mitochondrion-targeting transit peptide spans 1-82 (MRAPSARALL…SSGARRCWVL (82 aa)). Residues 83–133 (AGPRAAHPLFARLQGAAATGVRDLGNDSQRRPAATGRSEVWKLLGLVRPER) lie on the Mitochondrial matrix side of the membrane. Residues 134-157 (GRLSAAVGFLAVSSVITMSAPFFL) traverse the membrane as a helical segment. Positions 136–422 (LSAAVGFLAV…LSSFYSELMK (287 aa)) constitute an ABC transmembrane type-1 domain. The Mitochondrial intermembrane segment spans residues 158-178 (GRIIDVIYTNPSEGYGDSLTR). A helical transmembrane segment spans residues 179–201 (LCAVLTCVFLCGAAANGIRVYLM). The Mitochondrial matrix segment spans residues 202–252 (QSSGQSIVNRLRTSLFSSILRQEVAFFDKTRTGELINRLSSDTALLGRSVT). Position 230 is an N6-acetyllysine (lysine 230). A helical membrane pass occupies residues 253 to 275 (ENLSDGLRAGAQASVGVGMMFFV). The Mitochondrial intermembrane segment spans residues 276–278 (SPS). Residues 279 to 298 (LATFVLSVVPPISVLAVIYG) traverse the membrane as a helical segment. At 299-357 (RYLRKLSKATQDSLAEATQLAEERIGNIRTIRAFGKEMTEVEKYTGRVDQLLQLAQKEA) the chain is on the mitochondrial matrix side. Residues 358–381 (LARAGFFGAAGLSGNLIVLSVLYK) traverse the membrane as a helical segment. Topologically, residues 382–395 (GGLLMGSAHMTVGE) are mitochondrial intermembrane. Residues 396–417 (LSSFLMYAFWVGLSIGGLSSFY) traverse the membrane as a helical segment. The Mitochondrial matrix segment spans residues 418–715 (SELMKGLGAG…AEQFLEPARA (298 aa)). Positions 457 to 696 (LEFRNVHFTY…PNGLYRKLMN (240 aa)) constitute an ABC transporter domain. Residues glycine 495, glycine 497, lysine 498, serine 499, and threonine 500 each coordinate ATP. Serine 499 is a Mg(2+) binding site. An S-glutathionyl cysteine modification is found at cysteine 547. Aspartate 623 is a binding site for Mg(2+).

Belongs to the ABC transporter superfamily. ABCB family. Mitochondrial peptide exporter (TC 3.A.1.212) subfamily. In terms of assembly, homodimer or homooligomer. Interacts with PAAT; this interaction regulates ABCB10. Interacts with SLC25A37; this interaction stabilizes SLC25A37 and enhances the function of SLC25A37 to import mitochondrial iron during erythroid differentiation. Interacts with FECH; this interaction may allow the formation of the oligomeric complex with SLC25A37. Forms a complex with ABCB7 and FECH, where a dimeric FECH bridges ABCB7 and ABCB10 homodimers; this complex may be required for cellular iron homeostasis, mitochondrial function and heme biosynthesis. As to expression, expressed at particularly high levels in fetal liver, and erythroid tissues of embryos and adults. Found also in adult bone marrow, liver and kidney, and at lower levels in heart, brain and spleen.

It is found in the mitochondrion inner membrane. It carries out the reaction biliverdin IXalpha(in) + ATP + H2O = biliverdin IXalpha(out) + ADP + phosphate + H(+). Oxidized glutathione (GSSG) stimulates ATP hydrolysis without affecting ATP binding, whereas reduced glutathione (GSH) inhibits ATP binding and hydrolysis. Functionally, ATP-dependent transporter located in the mitochondrial inner membrane that catalyzes the export of biliverdin from the mitochondrial matrix, and plays a crucial role in hemoglobin synthesis and antioxidative stress. Participates in the early step of the heme biosynthetic process during insertion of iron into protoporphyrin IX (PPIX). Involved in the stabilization of the iron transporter mitoferrin-1/SLC25A37. In addition may be involved in mitochondrial unfolded protein response (UPRmt) signaling pathway, although ABCB10 probably does not participate in peptide export from mitochondria. In Mus musculus (Mouse), this protein is ATP-binding cassette sub-family B member 10, mitochondrial.